Reading from the N-terminus, the 1325-residue chain is Protein suppressor of sable (1325 aa).

2 disordered regions span residues 1 to 36 and 74 to 326; these read MSVA…SKIQ and VCLQ…GGSN. Positions 9-30 are enriched in acidic residues; sequence PLIDLEEDLEDGEIDDDEEDEQ. Residues 119-131 show a composition bias toward polar residues; that stretch reads RSSNQDTSDQSLE. Residues 138-327 form a highly charged region; that stretch reads ATANPLLQST…GQEKMGGSNR (190 aa). Residues 149 to 158 are compositionally biased toward basic residues; the sequence is SSRRRKRKKE. The stretch at 149 to 179 forms a coiled coil; the sequence is SSRRRKRKKEREREQKKDKEQQNRSRRDEND. The segment covering 159–178 has biased composition (basic and acidic residues); sequence REREQKKDKEQQNRSRRDEN. A compositionally biased stretch (gly residues) spans 236–246; sequence AGLGAGGGGGY. Residues 276 to 296 adopt a coiled-coil conformation; the sequence is NEKEHQRGVNNRKRRDRDRLE. C3H1-type zinc fingers lie at residues 330–357 and 358–381; these read PRKL…HKEF and PCKY…HGEP. Residues 444 to 478 adopt a coiled-coil conformation; sequence KRQDHQMQQQQQQLQHQQLQQQQEQQQTQQQAAAD. Over residues 499-509 the composition is skewed to basic and acidic residues; sequence KRKSRWTEKMG. Disordered regions lie at residues 499–535, 588–622, 639–695, 710–745, 780–835, 979–1058, 1143–1170, and 1295–1325; these read KRKS…LPPH, KAED…KSNG, FSGN…PSVF, SARQ…IGGG, AHSG…ALPP, DLET…GGSK, EPNG…GGGV, and RGGH…NRNI. S524 bears the Phosphoserine mark. Polar residues predominate over residues 594 to 606; that stretch reads PQTQAELESSTPP. T604 is modified (phosphothreonine). The span at 644–668 shows a compositional bias: acidic residues; sequence PLDDDRDDDEQLIIDDGNDSTAEED. S663 carries the phosphoserine modification. Phosphothreonine is present on T664. The span at 710-726 shows a compositional bias: polar residues; the sequence is SARQLLPASATSPNQEN. Positions 790 to 800 are enriched in low complexity; it reads SNENSNSNSHS. Positions 1003–1015 are enriched in pro residues; it reads SVPPPSMRVPPPN. Basic and acidic residues predominate over residues 1021–1033; it reads PTVRTDPRRDPRR. Residues 1042-1056 are compositionally biased toward low complexity; that stretch reads GASTANTTAPNASGG. 2 stretches are compositionally biased toward gly residues: residues 1149 to 1170 and 1295 to 1309; these read AALG…GGGV and RGGH…GNGN.

This sequence belongs to the suppressor of sable family. Interacts with Wdr82.

Its subcellular location is the nucleus. It is found in the chromosome. Its function is as follows. RNA-binding protein that suppresses transcription of some RNAs. Together with Wdr82, part of a transcription termination checkpoint that promotes transcription termination of RNAs and their subsequent degradation by the nuclear exosome. Promotes transcription termination of aberrant RNAs, transcripts from genes containing a transposon inserted at their very 5' end or RNAs from heat-shock-inducible repetitive element. Binds RNA preferentially at a sequence that resembles a cryptic 5'-splice site. This Drosophila melanogaster (Fruit fly) protein is Protein suppressor of sable.